We begin with the raw amino-acid sequence, 261 residues long: DNA repair protein RecO (261 aa).

Belongs to the RecO family.

In terms of biological role, involved in DNA repair and RecF pathway recombination. This is DNA repair protein RecO from Chlorobium phaeobacteroides (strain BS1).